Consider the following 66-residue polypeptide: Large ribosomal subunit protein bL35 (66 aa).

Belongs to the bacterial ribosomal protein bL35 family.

The protein is Large ribosomal subunit protein bL35 of Afipia carboxidovorans (strain ATCC 49405 / DSM 1227 / KCTC 32145 / OM5) (Oligotropha carboxidovorans).